The chain runs to 264 residues: Hydroxyethylthiazole kinase (264 aa).

A substrate-binding site is contributed by methionine 55. ATP contacts are provided by arginine 130 and serine 176. Glycine 203 is a binding site for substrate.

Belongs to the Thz kinase family. Mg(2+) serves as cofactor.

The enzyme catalyses 5-(2-hydroxyethyl)-4-methylthiazole + ATP = 4-methyl-5-(2-phosphooxyethyl)-thiazole + ADP + H(+). The protein operates within cofactor biosynthesis; thiamine diphosphate biosynthesis; 4-methyl-5-(2-phosphoethyl)-thiazole from 5-(2-hydroxyethyl)-4-methylthiazole: step 1/1. Functionally, catalyzes the phosphorylation of the hydroxyl group of 4-methyl-5-beta-hydroxyethylthiazole (THZ). This chain is Hydroxyethylthiazole kinase, found in Leptospira borgpetersenii serovar Hardjo-bovis (strain JB197).